Consider the following 207-residue polypeptide: Ribonuclease HII (207 aa).

The RNase H type-2 domain maps to 5–207 (PLIIGVDEAG…APVRALLRPC (203 aa)). Asp11, Glu12, and Asp117 together coordinate a divalent metal cation.

It belongs to the RNase HII family. It depends on Mn(2+) as a cofactor. The cofactor is Mg(2+).

The protein resides in the cytoplasm. It carries out the reaction Endonucleolytic cleavage to 5'-phosphomonoester.. Endonuclease that specifically degrades the RNA of RNA-DNA hybrids. The chain is Ribonuclease HII from Hyphomonas neptunium (strain ATCC 15444).